We begin with the raw amino-acid sequence, 410 residues long: Beta-arrestin-1 (410 aa).

Residues 1–163 (MGDKGTRVFK…LEEKIHKRNS (163 aa)) are interaction with SRC. Residues 45-86 (PEYLKERRVYVTLTCAFRYGREDLDVLGLTFRKDLFVANVQS) form an interaction with CHRM2 region. Y47 carries the post-translational modification Phosphotyrosine. Positions 250, 255, 324, and 326 each coordinate 1D-myo-inositol hexakisphosphate. Residues 318–410 (IVSYKVKVKL…GTGSPQLNNR (93 aa)) form an interaction with TRAF6 region. A [DE]-X(1,2)-F-X-X-[FL]-X-X-X-R motif motif is present at residues 385-395 (RQRLKGMKDDK). A disordered region spans residues 389-410 (KGMKDDKEEEENGTGSPQLNNR). The span at 401-410 (GTGSPQLNNR) shows a compositional bias: polar residues. Position 404 is a phosphoserine; by GRK5 (S404).

The protein belongs to the arrestin family. Monomer. Homodimer. Homooligomer; the self-association is mediated by InsP6-binding. Heterooligomer with ARRB2; the association is mediated by InsP6-binding. Interacts with ADRB2 (phosphorylated). Interacts with CHRM2 (phosphorylated). Interacts with LHCGR. Interacts with CYTH2 and CASR. Interacts with AP2B1 (dephosphorylated); phosphorylation of AP2B1 disrupts the interaction. Interacts (dephosphorylated at Ser-404) with CLTC. Interacts with CCR2 and GRK2. Interacts with CRR5. Interacts with PTAFR (phosphorylated on serine residues). Interacts with CLTC and MAP2K3. Interacts with CREB1. Interacts with TRAF6. Interacts with IGF1R and MDM2. Interacts with C5AR1. Interacts with PDE4D. Interacts with SRC (via the SH3 domain and the protein kinase domain); the interaction is independent of the phosphorylation state of SRC C-terminus. Interacts with TACR1. Interacts with RAF1. Interacts with CHUK, IKBKB and MAP3K14. Interacts with DVL1; the interaction is enhanced by phosphorylation of DVL1. Interacts with DVL2; the interaction is enhanced by phosphorylation of DVL2. Interacts with IGF1R. Associates with MAP kinase p38. Part of a MAPK signaling complex consisting of TACR1, ARRB1, SRC, MAPK1 (activated) and MAPK3 (activated). Part of a MAPK signaling complex consisting of F2RL1, ARRB1, RAF1, MAPK1 (activated) and MAPK3 (activated). Interacts with GPR143. Interacts with MAP2K4/MKK4. Interacts with HCK and CXCR1 (phosphorylated). Interacts with ACKR3 and ACKR4. Interacts with ARRDC1; the interaction is direct. Interacts with GPR61, GPR62 and GPR135. Post-translationally, constitutively phosphorylated at in the cytoplasm. At the plasma membrane, is rapidly dephosphorylated, a process that is required for clathrin binding and ADRB2 endocytosis but not for ADRB2 binding and desensitization. Once internalized, is rephosphorylated. The ubiquitination status appears to regulate the formation and trafficking of beta-arrestin-GPCR complexes and signaling. Ubiquitination appears to occur GPCR-specific. Ubiquitinated by MDM2; the ubiquitination is required for rapid internalization of ADRB2. Deubiquitinated by USP33; the deubiquitination leads to a dissociation of the beta-arrestin-GPCR complex. Stimulation of a class A GPCR, such as ADRB2, induces transient ubiquitination and subsequently promotes association with USP33.

The protein localises to the cytoplasm. It localises to the nucleus. It is found in the cell membrane. Its subcellular location is the membrane. The protein resides in the clathrin-coated pit. The protein localises to the cell projection. It localises to the pseudopodium. It is found in the cytoplasmic vesicle. Functionally, functions in regulating agonist-mediated G-protein coupled receptor (GPCR) signaling by mediating both receptor desensitization and resensitization processes. During homologous desensitization, beta-arrestins bind to the GPRK-phosphorylated receptor and sterically preclude its coupling to the cognate G-protein; the binding appears to require additional receptor determinants exposed only in the active receptor conformation. The beta-arrestins target many receptors for internalization by acting as endocytic adapters (CLASPs, clathrin-associated sorting proteins) and recruiting the GPRCs to the adapter protein 2 complex 2 (AP-2) in clathrin-coated pits (CCPs). However, the extent of beta-arrestin involvement appears to vary significantly depending on the receptor, agonist and cell type. Internalized arrestin-receptor complexes traffic to intracellular endosomes, where they remain uncoupled from G-proteins. Two different modes of arrestin-mediated internalization occur. Class A receptors, like ADRB2, OPRM1, ENDRA, D1AR and ADRA1B dissociate from beta-arrestin at or near the plasma membrane and undergo rapid recycling. Class B receptors, like AVPR2, AGTR1, NTSR1, TRHR and TACR1 internalize as a complex with arrestin and traffic with it to endosomal vesicles, presumably as desensitized receptors, for extended periods of time. Receptor resensitization then requires that receptor-bound arrestin is removed so that the receptor can be dephosphorylated and returned to the plasma membrane. Involved in internalization of P2RY4 and UTP-stimulated internalization of P2RY2. Involved in phosphorylation-dependent internalization of OPRD1 ands subsequent recycling. Involved in the degradation of cAMP by recruiting cAMP phosphodiesterases to ligand-activated receptors. Beta-arrestins function as multivalent adapter proteins that can switch the GPCR from a G-protein signaling mode that transmits short-lived signals from the plasma membrane via small molecule second messengers and ion channels to a beta-arrestin signaling mode that transmits a distinct set of signals that are initiated as the receptor internalizes and transits the intracellular compartment. Acts as a signaling scaffold for MAPK pathways such as MAPK1/3 (ERK1/2). ERK1/2 activated by the beta-arrestin scaffold is largely excluded from the nucleus and confined to cytoplasmic locations such as endocytic vesicles, also called beta-arrestin signalosomes. Recruits c-Src/SRC to ADRB2 resulting in ERK activation. GPCRs for which the beta-arrestin-mediated signaling relies on both ARRB1 and ARRB2 (codependent regulation) include ADRB2, F2RL1 and PTH1R. For some GPCRs the beta-arrestin-mediated signaling relies on either ARRB1 or ARRB2 and is inhibited by the other respective beta-arrestin form (reciprocal regulation). Inhibits ERK1/2 signaling in AGTR1- and AVPR2-mediated activation (reciprocal regulation). Is required for SP-stimulated endocytosis of NK1R and recruits c-Src/SRC to internalized NK1R resulting in ERK1/2 activation, which is required for the antiapoptotic effects of SP. Is involved in proteinase-activated F2RL1-mediated ERK activity. Acts as a signaling scaffold for the AKT1 pathway. Is involved in alpha-thrombin-stimulated AKT1 signaling. Is involved in IGF1-stimulated AKT1 signaling leading to increased protection from apoptosis. Involved in activation of the p38 MAPK signaling pathway and in actin bundle formation. Involved in F2RL1-mediated cytoskeletal rearrangement and chemotaxis. Involved in AGTR1-mediated stress fiber formation by acting together with GNAQ to activate RHOA. Appears to function as signaling scaffold involved in regulation of MIP-1-beta-stimulated CCR5-dependent chemotaxis. Involved in attenuation of NF-kappa-B-dependent transcription in response to GPCR or cytokine stimulation by interacting with and stabilizing CHUK. May serve as nuclear messenger for GPCRs. Involved in OPRD1-stimulated transcriptional regulation by translocating to CDKN1B and FOS promoter regions and recruiting EP300 resulting in acetylation of histone H4. Involved in regulation of LEF1 transcriptional activity via interaction with DVL1 and/or DVL2 Also involved in regulation of receptors other than GPCRs. Involved in Toll-like receptor and IL-1 receptor signaling through the interaction with TRAF6 which prevents TRAF6 autoubiquitination and oligomerization required for activation of NF-kappa-B and JUN. Involved in IL8-mediated granule release in neutrophils. Binds phosphoinositides. Binds inositolhexakisphosphate (InsP6). Required for atypical chemokine receptor ACKR2-induced RAC1-LIMK1-PAK1-dependent phosphorylation of cofilin (CFL1) and for the up-regulation of ACKR2 from endosomal compartment to cell membrane, increasing its efficiency in chemokine uptake and degradation. Involved in the internalization of the atypical chemokine receptor ACKR3. Negatively regulates the NOTCH signaling pathway by mediating the ubiquitination and degradation of NOTCH1 by ITCH. Participates in the recruitment of the ubiquitin-protein ligase to the receptor. This chain is Beta-arrestin-1 (ARRB1), found in Macaca fascicularis (Crab-eating macaque).